The sequence spans 194 residues: Chromophore lyase CpcT/CpeT 1 (194 aa).

It belongs to the CpcT/CpeT biliprotein lyase family.

In terms of biological role, covalently attaches a chromophore to Cys residue(s) of phycobiliproteins. The polypeptide is Chromophore lyase CpcT/CpeT 1 (Microcystis aeruginosa (strain NIES-843 / IAM M-2473)).